The primary structure comprises 318 residues: Transaldolase (318 aa).

The active-site Schiff-base intermediate with substrate is K132.

The protein belongs to the transaldolase family. Type 1 subfamily. As to quaternary structure, homodimer.

It is found in the cytoplasm. The enzyme catalyses D-sedoheptulose 7-phosphate + D-glyceraldehyde 3-phosphate = D-erythrose 4-phosphate + beta-D-fructose 6-phosphate. It functions in the pathway carbohydrate degradation; pentose phosphate pathway; D-glyceraldehyde 3-phosphate and beta-D-fructose 6-phosphate from D-ribose 5-phosphate and D-xylulose 5-phosphate (non-oxidative stage): step 2/3. Transaldolase is important for the balance of metabolites in the pentose-phosphate pathway. This is Transaldolase from Shewanella woodyi (strain ATCC 51908 / MS32).